The primary structure comprises 1342 residues: Zinc finger protein 335 (1342 aa).

Disordered regions lie at residues 1–102 and 201–228; these read MEEN…VTGG and TSTS…AEEP. Residues 34-49 show a composition bias toward low complexity; sequence AVSADSSDAAAAPGQA. Residues 201–217 are compositionally biased toward polar residues; it reads TSTSTCLEAQGGPSSPV. The C2H2-type 1 zinc-finger motif lies at 245-268; the sequence is FKCKMCQYRSSTKATLLRHMRERH. The disordered stretch occupies residues 274 to 442; it reads AAAAAAGKKG…TLPRRRGRPS (169 aa). A compositionally biased stretch (acidic residues) spans 297–327; that stretch reads EEGPEEEDDDDIVDAGAIDDLEEDSDYNPAE. The segment covering 346–357 has biased composition (basic residues); sequence RPRRRPGRPRKL. 8 consecutive C2H2-type zinc fingers follow at residues 465 to 487, 495 to 517, 523 to 545, 562 to 584, 590 to 612, 621 to 643, 649 to 672, and 678 to 701; these read FLCR…VNSH, FKCL…MFNH, YKCD…AAVH, FPCP…MKTH, HMCD…LLTH, FKCE…QLSH, FKCS…AVKH, and FACE…RCRH. Disordered regions lie at residues 732–763 and 964–1013; these read LKQQ…QSSE and CGGL…SAAT. Residues 740–753 are compositionally biased toward pro residues; it reads PGPPPSSPGPPEIP. S976, S992, and S1007 each carry phosphoserine. A compositionally biased stretch (low complexity) spans 986–997; it reads SQSSASSPPATS. 4 C2H2-type zinc fingers span residues 1019-1041, 1047-1069, 1075-1097, and 1103-1126; these read FSCK…KRAH, FKCP…MAQH, HQCS…MLTH, and FACH…QRLH. Residue K1022 forms a Glycyl lysine isopeptide (Lys-Gly) (interchain with G-Cter in SUMO2) linkage. An involved in the interaction with CCAR2 region spans residues 1041–1342; it reads HAGPGAFKCP…EYDVITLADD (302 aa). The residue at position 1153 (S1153) is a Phosphoserine.

This sequence belongs to the krueppel C2H2-type zinc-finger protein family. As to quaternary structure, interacts with NCOA6; may enhance ligand-dependent transcriptional activation by nuclear hormone receptors. Interacts with CNOT6. Interacts with CNOT9; the interaction is direct. Component of a nuclear receptor-mediated transcription complex composed of at least ZNF335, CCAR2 and EMSY; the complex stimulates the transcription of nuclear receptor target genes such as SOX9 and HOXA1. Within the complex interacts with EMSY and interacts (via C-terminus) with CCAR2. Interacts with members of histone H3'Lys4'(H3K4) methyltransferase complexes ASH2L, CXXC1, KMT2A/MLL1, RBBP5, SETD1A and WDR5. Component of a histone methylation complex composed of at least ZNF335, RBBP5, ASH2L and WDR5; the complex may have histone H3-specific methyltransferase activity, however does not have specificity for 'Lys-4' of histone H3. Interacts with RBBP5 and WDR5. Interacts with ASHL2. Components of this complex may associate with components of the ZNF335-CCAR2-EMSY nuclear receptor-mediated transcription complex to form a complex at least composed of ZNF335, HCFC1, CCAR2, EMSY, MKI67, RBBP5, ASH2L and WDR5. Within this complex also interacts with HCFC1 and MKI67. In terms of tissue distribution, ubiquitously expressed.

It localises to the nucleus. Its function is as follows. Component or associated component of some histone methyltransferase complexes may regulate transcription through recruitment of those complexes on gene promoters. Enhances ligand-dependent transcriptional activation by nuclear hormone receptors. Plays an important role in neural progenitor cell proliferation and self-renewal through the regulation of specific genes involved brain development, including REST. Also controls the expression of genes involved in somatic development and regulates, for instance, lymphoblast proliferation. This is Zinc finger protein 335 (ZNF335) from Homo sapiens (Human).